Reading from the N-terminus, the 294-residue chain is Phosphatidylserine decarboxylase proenzyme (294 aa).

Residues D100, H157, and S261 each act as charge relay system; for autoendoproteolytic cleavage activity in the active site. The active-site Schiff-base intermediate with substrate; via pyruvic acid; for decarboxylase activity is S261. Pyruvic acid (Ser); by autocatalysis is present on S261.

The protein belongs to the phosphatidylserine decarboxylase family. PSD-B subfamily. Prokaryotic type I sub-subfamily. Heterodimer of a large membrane-associated beta subunit and a small pyruvoyl-containing alpha subunit. It depends on pyruvate as a cofactor. Post-translationally, is synthesized initially as an inactive proenzyme. Formation of the active enzyme involves a self-maturation process in which the active site pyruvoyl group is generated from an internal serine residue via an autocatalytic post-translational modification. Two non-identical subunits are generated from the proenzyme in this reaction, and the pyruvate is formed at the N-terminus of the alpha chain, which is derived from the carboxyl end of the proenzyme. The autoendoproteolytic cleavage occurs by a canonical serine protease mechanism, in which the side chain hydroxyl group of the serine supplies its oxygen atom to form the C-terminus of the beta chain, while the remainder of the serine residue undergoes an oxidative deamination to produce ammonia and the pyruvoyl prosthetic group on the alpha chain. During this reaction, the Ser that is part of the protease active site of the proenzyme becomes the pyruvoyl prosthetic group, which constitutes an essential element of the active site of the mature decarboxylase.

It localises to the cell membrane. It catalyses the reaction a 1,2-diacyl-sn-glycero-3-phospho-L-serine + H(+) = a 1,2-diacyl-sn-glycero-3-phosphoethanolamine + CO2. It functions in the pathway phospholipid metabolism; phosphatidylethanolamine biosynthesis; phosphatidylethanolamine from CDP-diacylglycerol: step 2/2. Catalyzes the formation of phosphatidylethanolamine (PtdEtn) from phosphatidylserine (PtdSer). In Histophilus somni (strain 2336) (Haemophilus somnus), this protein is Phosphatidylserine decarboxylase proenzyme.